The following is a 374-amino-acid chain: MELEDPTMADSTIKLTVKFGGKSIPLSVSPDCTVKDLKSQLQPITNVLPRGQKLIFKGKVLVETSTLKQSDVGSGAKLMLMASQGLHQGEGPILKEASIRPISRTVVSDKVDQRKPSVLVDKNRTDRWKATGVIALAQANLKEIPEEVWDCGSGVRVLDISENFIKEVPAKISSFGSMQKLFLQGNGLSDESIQWEGIASLKRLMLLSISHNNLTVLPSAMGSLTSLRQLDVTNNKLTSLPNELGLLTQLEILKANNNRITSLPESIGNCSFLMEVDLSANIISELPETFTKLRNLKTLELNNTGLKTLPSALFKMCLQLSTLGLHNTEITVEFLRQFEGYDDFDERRRTKHQKQLDFRVVGSGQFDEGADKSW.

Residues 13–87 (IKLTVKFGGK…LMLMASQGLH (75 aa)) form the Ubiquitin-like domain. LRR repeat units follow at residues 128–151 (WKAT…VWDC), 152–175 (GSGV…ISSF), 177–200 (SMQK…GIAS), 201–224 (LKRL…MGSL), 225–248 (TSLR…GLLT), 250–270 (LEIL…IGNC), 272–293 (FLME…FTKL), 294–316 (RNLK…LFKM), and 318–340 (LQLS…QFEG).

This chain is LRR repeats and ubiquitin-like domain-containing protein At2g30105, found in Arabidopsis thaliana (Mouse-ear cress).